We begin with the raw amino-acid sequence, 102 residues long: Aspartyl/glutamyl-tRNA(Asn/Gln) amidotransferase subunit C (102 aa).

The protein belongs to the GatC family. As to quaternary structure, heterotrimer of A, B and C subunits.

It catalyses the reaction L-glutamyl-tRNA(Gln) + L-glutamine + ATP + H2O = L-glutaminyl-tRNA(Gln) + L-glutamate + ADP + phosphate + H(+). The enzyme catalyses L-aspartyl-tRNA(Asn) + L-glutamine + ATP + H2O = L-asparaginyl-tRNA(Asn) + L-glutamate + ADP + phosphate + 2 H(+). Allows the formation of correctly charged Asn-tRNA(Asn) or Gln-tRNA(Gln) through the transamidation of misacylated Asp-tRNA(Asn) or Glu-tRNA(Gln) in organisms which lack either or both of asparaginyl-tRNA or glutaminyl-tRNA synthetases. The reaction takes place in the presence of glutamine and ATP through an activated phospho-Asp-tRNA(Asn) or phospho-Glu-tRNA(Gln). This is Aspartyl/glutamyl-tRNA(Asn/Gln) amidotransferase subunit C from Bordetella parapertussis (strain 12822 / ATCC BAA-587 / NCTC 13253).